A 348-amino-acid polypeptide reads, in one-letter code: MO25-like protein At2g03410 (348 aa).

This sequence belongs to the Mo25 family.

The protein is MO25-like protein At2g03410 of Arabidopsis thaliana (Mouse-ear cress).